A 1047-amino-acid chain; its full sequence is Probable sucrose-phosphate synthase 2 (1047 aa).

Over residues 101-123 (EGKNAKREAKREREREKARREVT) the composition is skewed to basic and acidic residues. Residues 101 to 153 (EGKNAKREAKREREREKARREVTAEMSEDFSEGEKADLPGEIPTPSDNNTKGR) form a disordered region. A phosphoserine mark is found at Ser127, Ser131, and Ser159. The tract at residues 712–731 (KSGSNNGVDTNLDAEDRAAE) is disordered.

It belongs to the glycosyltransferase 1 family. Homodimer or homotetramer. In terms of tissue distribution, expressed in roots, cauline leaves, flower buds, flowers and anthers. Highly expressed in maturing nectaries.

The enzyme catalyses beta-D-fructose 6-phosphate + UDP-alpha-D-glucose = sucrose 6(F)-phosphate + UDP + H(+). Its pathway is glycan biosynthesis; sucrose biosynthesis; sucrose from D-fructose 6-phosphate and UDP-alpha-D-glucose: step 1/2. Activity is regulated by phosphorylation and moderated by concentration of metabolites and light. Its function is as follows. Plays a role in photosynthetic sucrose synthesis by catalyzing the rate-limiting step of sucrose biosynthesis from UDP-glucose and fructose- 6-phosphate. Involved in the regulation of carbon partitioning in the leaves of plants. May regulate the synthesis of sucrose and therefore play a major role as a limiting factor in the export of photoassimilates out of the leaf. Plays a role for sucrose availability that is essential for plant growth and fiber elongation. Required for nectar secretion. This chain is Probable sucrose-phosphate synthase 2 (SPS2), found in Arabidopsis thaliana (Mouse-ear cress).